Here is a 620-residue protein sequence, read N- to C-terminus: Glutathione-regulated potassium-efflux system protein KefC (620 aa).

The next 12 membrane-spanning stretches (helical) occupy residues 4–24, 26–46, 54–74, 90–110, 114–134, 149–169, 178–198, 218–238, 270–290, 294–314, 327–347, and 359–379; these read HTLIQALIYLGSAALIVPIAV, LGLGSVLGYLIAGCIIGPWGL, SILHFAEIGVVLMLFIIGLEL, GALQMVICGGLLGLFCMLLGL, VAELIGMTLALSSTAIAMQAM, FAVLLFQDIAAIPLVAMIPLL, MGAFVLSALKVAGALALVVLL, VFSAVALFLVFGFGLLLEEVG, GLLLGLFFIGVGMSIDFGTLI, LRIVILLLGFLIIKIAMLWLI, WFAVLLGQGSEFAFVVFGAAQ, and SLTLAVALSMAATPILLVILN. Residues 399–518 enclose the RCK N-terminal domain; sequence QPRVIIAGFG…AGVEKPERET (120 aa). Residues 597–620 form a disordered region; sequence GWQGTEEGKHTGNMADEPETKPSS.

This sequence belongs to the monovalent cation:proton antiporter 2 (CPA2) transporter (TC 2.A.37) family. KefC subfamily. In terms of assembly, homodimer. Interacts with the regulatory subunit KefF.

It is found in the cell inner membrane. Functionally, pore-forming subunit of a potassium efflux system that confers protection against electrophiles. Catalyzes K(+)/H(+) antiport. The sequence is that of Glutathione-regulated potassium-efflux system protein KefC from Escherichia coli O45:K1 (strain S88 / ExPEC).